We begin with the raw amino-acid sequence, 957 residues long: Retinoblastoma-related protein 1 (957 aa).

The domain A stretch occupies residues 369-569; the sequence is TPVSTAMTTA…EKGSSMYNSL (201 aa). Positions 369 to 808 are pocket; the sequence is TPVSTAMTTA…NEVFIPTVKP (440 aa). The interval 570 to 677 is spacer; it reads IVARPTLSAE…PAAGGETCAE (108 aa). The tract at residues 678–808 is domain B; the sequence is TGIGVFLSKI…NEVFIPTVKP (131 aa). The disordered stretch occupies residues 814 to 854; it reads GPGTSPNRNNEPKSGGDAASFPESPRLSRFPNLPDMSPKKV.

It belongs to the retinoblastoma protein (RB) family.

Its subcellular location is the nucleus. Regulator of biological processes that recruits a histone deacetylase to control gene transcription. May play a role in the entry into mitosis, negatively regulating the cell proliferation. Formation of stable complexes with geminiviridae replication-associated proteins may create a cellular environment which favors viral DNA replication. The protein is Retinoblastoma-related protein 1 (RBR1) of Triticum aestivum (Wheat).